The following is a 207-amino-acid chain: MKTKILSLANEEVGEISLNEDIFAVEFIRDDIIKQVIDWQRAKAMSGNHKTKTVSEVLGTTKKPFKQKGTGNARQGSLRSVQMRGGGVAHGPRVRSHATKLPKKVRKLGLIHALSEKCAEGKLLVIDSLKLDKPKTSVLVNILNKFQGKSFFVIDGNEVDINFSLAAKNIYNTVIVPQIGANVYDIIRHEYVLLSQEAVSVLEERLR.

Belongs to the universal ribosomal protein uL4 family. Part of the 50S ribosomal subunit.

In terms of biological role, one of the primary rRNA binding proteins, this protein initially binds near the 5'-end of the 23S rRNA. It is important during the early stages of 50S assembly. It makes multiple contacts with different domains of the 23S rRNA in the assembled 50S subunit and ribosome. Functionally, forms part of the polypeptide exit tunnel. The protein is Large ribosomal subunit protein uL4 of Rickettsia peacockii (strain Rustic).